The following is a 210-amino-acid chain: Putative 3-methyladenine DNA glycosylase (210 aa).

It belongs to the DNA glycosylase MPG family.

The chain is Putative 3-methyladenine DNA glycosylase from Corynebacterium glutamicum (strain R).